The primary structure comprises 148 residues: UPF0756 membrane protein YeaL (148 aa).

4 helical membrane-spanning segments follow: residues 14–34, 51–71, 86–106, and 121–141; these read ALGF…LIIV, LSIG…SGTL, LVAI…VTLM, and VLGV…AGLV.

This sequence belongs to the UPF0756 family.

The protein resides in the cell membrane. In Shigella flexneri, this protein is UPF0756 membrane protein YeaL.